Reading from the N-terminus, the 304-residue chain is Methionyl-tRNA formyltransferase (304 aa).

110 to 113 (SLLP) provides a ligand contact to (6S)-5,6,7,8-tetrahydrofolate.

This sequence belongs to the Fmt family.

It catalyses the reaction L-methionyl-tRNA(fMet) + (6R)-10-formyltetrahydrofolate = N-formyl-L-methionyl-tRNA(fMet) + (6S)-5,6,7,8-tetrahydrofolate + H(+). Its function is as follows. Attaches a formyl group to the free amino group of methionyl-tRNA(fMet). The formyl group appears to play a dual role in the initiator identity of N-formylmethionyl-tRNA by promoting its recognition by IF2 and preventing the misappropriation of this tRNA by the elongation apparatus. This is Methionyl-tRNA formyltransferase from Gluconobacter oxydans (strain 621H) (Gluconobacter suboxydans).